The following is a 402-amino-acid chain: TBC1 domain family member 20 (402 aa).

Positions 1–27 (MALRPSKGDGSAGRWDRGAGKADFNAK) are disordered. Residues 14–26 (RWDRGAGKADFNA) show a composition bias toward basic and acidic residues. One can recognise a Rab-GAP TBC domain in the interval 59-245 (LLTDEIRCQV…RLYDFFLACH (187 aa)). 2 helical membrane passes run 237-257 (LYDFFLACHPLMPIYFAAVIV) and 366-386 (FVKLAVMGLTVALGAAALAVV).

It localises to the membrane. In terms of biological role, GTPase-activating protein specific for Rab1 and Rab2 small GTPase families for which it can accelerate the intrinsic GTP hydrolysis rate by more than five orders of magnitude. Also shows GAP activity for RAB18 GTPase. Promotes RAB18 dissociation from the endoplasmic reticulum (ER) membrane into the cytosol, probably through stimulating RAB18 GTP-hydrolysis. Involved in maintaining endoplasmic reticulum structure. In Mus musculus (Mouse), this protein is TBC1 domain family member 20.